Here is a 507-residue protein sequence, read N- to C-terminus: ATP synthase subunit alpha (507 aa).

ATP is bound at residue 171 to 178 (GDRQTGKT).

The protein belongs to the ATPase alpha/beta chains family. In terms of assembly, F-type ATPases have 2 components, CF(1) - the catalytic core - and CF(0) - the membrane proton channel. CF(1) has five subunits: alpha(3), beta(3), gamma(1), delta(1), epsilon(1). CF(0) has three main subunits: a(1), b(2) and c(9-12). The alpha and beta chains form an alternating ring which encloses part of the gamma chain. CF(1) is attached to CF(0) by a central stalk formed by the gamma and epsilon chains, while a peripheral stalk is formed by the delta and b chains.

The protein localises to the cell inner membrane. It catalyses the reaction ATP + H2O + 4 H(+)(in) = ADP + phosphate + 5 H(+)(out). Functionally, produces ATP from ADP in the presence of a proton gradient across the membrane. The alpha chain is a regulatory subunit. The polypeptide is ATP synthase subunit alpha (Bdellovibrio bacteriovorus (strain ATCC 15356 / DSM 50701 / NCIMB 9529 / HD100)).